Consider the following 227-residue polypeptide: UPF0173 metal-dependent hydrolase STK_14180 (227 aa).

The protein belongs to the UPF0173 family.

This chain is UPF0173 metal-dependent hydrolase STK_14180, found in Sulfurisphaera tokodaii (strain DSM 16993 / JCM 10545 / NBRC 100140 / 7) (Sulfolobus tokodaii).